A 556-amino-acid polypeptide reads, in one-letter code: 2-succinyl-5-enolpyruvyl-6-hydroxy-3-cyclohexene-1-carboxylate synthase (556 aa).

It belongs to the TPP enzyme family. MenD subfamily. In terms of assembly, homodimer. Mg(2+) serves as cofactor. It depends on Mn(2+) as a cofactor. Thiamine diphosphate is required as a cofactor.

The catalysed reaction is isochorismate + 2-oxoglutarate + H(+) = 5-enolpyruvoyl-6-hydroxy-2-succinyl-cyclohex-3-ene-1-carboxylate + CO2. It functions in the pathway quinol/quinone metabolism; 1,4-dihydroxy-2-naphthoate biosynthesis; 1,4-dihydroxy-2-naphthoate from chorismate: step 2/7. Its pathway is quinol/quinone metabolism; menaquinone biosynthesis. Its function is as follows. Catalyzes the thiamine diphosphate-dependent decarboxylation of 2-oxoglutarate and the subsequent addition of the resulting succinic semialdehyde-thiamine pyrophosphate anion to isochorismate to yield 2-succinyl-5-enolpyruvyl-6-hydroxy-3-cyclohexene-1-carboxylate (SEPHCHC). This chain is 2-succinyl-5-enolpyruvyl-6-hydroxy-3-cyclohexene-1-carboxylate synthase, found in Escherichia fergusonii (strain ATCC 35469 / DSM 13698 / CCUG 18766 / IAM 14443 / JCM 21226 / LMG 7866 / NBRC 102419 / NCTC 12128 / CDC 0568-73).